The chain runs to 1176 residues: Myosin light chain kinase, smooth muscle (1176 aa).

Residues 1–41 (MDFRANLQRQVKPKTLSEEERKVHGPQQVDFRSVLAKKGTP) form an actin-binding (calcium/calmodulin-sensitive) region. Residues 1-354 (MDFRANLQRQ…SEKRPESRGT (354 aa)) are disordered. A calmodulin-binding region spans residues 26–41 (PQQVDFRSVLAKKGTP). The span at 43–55 (TPVPEKVPPPKPA) shows a compositional bias: pro residues. 16 tandem repeats follow at residues 100 to 111 (FLKPVGNAKLAD), 112 to 123 (TPKPLSSTKPAE), 124 to 135 (TPKPLGNVKPAE), 136 to 147 (TPKPLGSTKPAE), 148 to 159 (TPKPLGSTKPAE), 160 to 171 (TPKPLGNVKPAE), 172 to 183 (TPKPLGNIKPTE), 184 to 195 (TPKPLGSTKPAE), 196 to 207 (TPKPLGSTKPAE), 208 to 219 (TPKPLGNVKPAE), 220 to 231 (TPKPLGNVKPAE), 232 to 243 (TPKPLGNVKPAE), 244 to 255 (TPKPVSNAKPAE), 256 to 267 (TLKPVGNAKPAE), 268 to 279 (TPKPLSNVKPAE), and 280 to 291 (TPKLVGNAKPAE). Positions 100 to 291 (FLKPVGNAKL…KLVGNAKPAE (192 aa)) are 16 X 12 AA tandem repeats. Ser-202 carries the post-translational modification Phosphoserine. The tract at residues 319–721 (PTGKEELKKE…TVTVNTEQKV (403 aa)) is actin-binding (calcium/calmodulin-insensitive). Residues 320–335 (TGKEELKKEIKNDVNC) are compositionally biased toward basic and acidic residues. The Ig-like C2-type 1 domain occupies 356-444 (PTFEEKLQDL…GQAESSCQVT (89 aa)). A disulfide bond links Cys-377 and Cys-428. Positions 448 to 497 (PDAPTSENAKAPEMKARRPKSSLPPVLGTESDATVKKKPAPKTPPKAAMP) are disordered. Residues 498 to 586 (PQIIQFPEDQ…GSRQAQVNLT (89 aa)) form the Ig-like C2-type 2 domain. One can recognise a Fibronectin type-III domain in the interval 594–686 (PAGTPCASDI…QESELTALGE (93 aa)). The interval 673-707 (SEPSQESELTALGEKPEEEPKDEVEVSDDDEKEPE) is disordered. A compositionally biased stretch (acidic residues) spans 688 to 706 (PEEEPKDEVEVSDDDEKEP). Ser-699 carries the post-translational modification Phosphoserine. Tyr-710 is modified (phosphotyrosine; by ABL1). The Protein kinase domain occupies 725–980 (YDIEERLGSG…CTQCLQHPWL (256 aa)). ATP-binding positions include 731 to 739 (LGSGKFGQV) and Lys-754. Tyr-836 carries the phosphotyrosine; by ABL1 modification. Residue Asp-846 is the Proton acceptor of the active site. Phosphotyrosine; by ABL1 is present on Tyr-896. The calmodulin-binding stretch occupies residues 972-1035 (TQCLQHPWLM…SGLSGRKSST (64 aa)). A phosphoserine mark is found at Ser-1020, Ser-1021, Ser-1033, Ser-1034, and Ser-1037. Thr-1039 is subject to Phosphothreonine. A Phosphoserine modification is found at Ser-1040. An Ig-like C2-type 3 domain is found at 1069-1158 (PYFSKTIRDL…GEATCTAELI (90 aa)). An intrachain disulfide couples Cys-1090 to Cys-1142.

This sequence belongs to the protein kinase superfamily. CAMK Ser/Thr protein kinase family. All isoforms including Telokin bind calmodulin. Interacts with SVIL. Interacts with CTTN; this interaction is reduced during thrombin-induced endothelial cell (EC) contraction but is promoted by the barrier-protective agonist sphingosine 1-phosphate (S1P) within lamellipodia. A complex made of ABL1, CTTN and MYLK regulates cortical actin-based cytoskeletal rearrangement critical to sphingosine 1-phosphate (S1P)-mediated endothelial cell (EC) barrier enhancement. Binds to NAA10/ARD1 and PTK2B/PYK2. It depends on Mg(2+) as a cofactor. Ca(2+) is required as a cofactor. The C-terminus is deglutamylated by AGTPBP1/CCP1, AGBL1/CCP4 and AGBL4/CCP6, leading to the formation of Myosin light chain kinase, smooth muscle, deglutamylated form. The consequences of C-terminal deglutamylation are unknown. Post-translationally, can probably be down-regulated by phosphorylation. Tyrosine phosphorylation by ABL1 increases kinase activity, reverses MLCK-mediated inhibition of Arp2/3-mediated actin polymerization, and enhances CTTN-binding. Phosphorylation by SRC promotes CTTN binding.

It localises to the cytoplasm. Its subcellular location is the cell projection. It is found in the lamellipodium. The protein resides in the cleavage furrow. The protein localises to the cytoskeleton. It localises to the stress fiber. It catalyses the reaction L-seryl-[myosin light chain] + ATP = O-phospho-L-seryl-[myosin light chain] + ADP + H(+). The enzyme catalyses L-threonyl-[myosin light chain] + ATP = O-phospho-L-threonyl-[myosin light chain] + ADP + H(+). Functionally, calcium/calmodulin-dependent myosin light chain kinase implicated in smooth muscle contraction via phosphorylation of myosin light chains (MLC). Also regulates actin-myosin interaction through a non-kinase activity. Phosphorylates PTK2B/PYK2 and myosin light-chains. Involved in the inflammatory response (e.g. apoptosis, vascular permeability, leukocyte diapedesis), cell motility and morphology, airway hyperreactivity and other activities relevant to asthma. Required for tonic airway smooth muscle contraction that is necessary for physiological and asthmatic airway resistance. Necessary for gastrointestinal motility. Implicated in the regulation of endothelial as well as vascular permeability, probably via the regulation of cytoskeletal rearrangements. In the nervous system it has been shown to control the growth initiation of astrocytic processes in culture and to participate in transmitter release at synapses formed between cultured sympathetic ganglion cells. Critical participant in signaling sequences that result in fibroblast apoptosis. Plays a role in the regulation of epithelial cell survival. Required for epithelial wound healing, especially during actomyosin ring contraction during purse-string wound closure. Mediates RhoA-dependent membrane blebbing. Triggers TRPC5 channel activity in a calcium-dependent signaling, by inducing its subcellular localization at the plasma membrane. Promotes cell migration (including tumor cells) and tumor metastasis. PTK2B/PYK2 activation by phosphorylation mediates ITGB2 activation and is thus essential to trigger neutrophil transmigration during acute lung injury (ALI). May regulate optic nerve head astrocyte migration. Probably involved in mitotic cytoskeletal regulation. Regulates tight junction probably by modulating ZO-1 exchange in the perijunctional actomyosin ring. Mediates burn-induced microvascular barrier injury; triggers endothelial contraction in the development of microvascular hyperpermeability by phosphorylating MLC. Essential for intestinal barrier dysfunction. Mediates Giardia spp.-mediated reduced epithelial barrier function during giardiasis intestinal infection via reorganization of cytoskeletal F-actin and tight junctional ZO-1. Necessary for hypotonicity-induced Ca(2+) entry and subsequent activation of volume-sensitive organic osmolyte/anion channels (VSOAC) in cervical cancer cells. In Bos taurus (Bovine), this protein is Myosin light chain kinase, smooth muscle (MYLK).